A 172-amino-acid polypeptide reads, in one-letter code: Putative phosphoesterase BCAH820_1309 (172 aa).

Catalysis depends on histidine 34, which acts as the Proton donor. 2 consecutive short sequence motifs (HXTX) follow at residues 34–37 and 115–118; these read HITL and HLTI. The active-site Proton acceptor is histidine 115.

This sequence belongs to the 2H phosphoesterase superfamily. YjcG family.

The sequence is that of Putative phosphoesterase BCAH820_1309 from Bacillus cereus (strain AH820).